Here is a 249-residue protein sequence, read N- to C-terminus: Probable transcriptional regulatory protein Rru_A1086 (249 aa).

It belongs to the TACO1 family.

The protein localises to the cytoplasm. This is Probable transcriptional regulatory protein Rru_A1086 from Rhodospirillum rubrum (strain ATCC 11170 / ATH 1.1.1 / DSM 467 / LMG 4362 / NCIMB 8255 / S1).